Reading from the N-terminus, the 184-residue chain is Non-specific lipid transfer protein GPI-anchored 6 (184 aa).

Residues 1-24 (MEKSTRTLFITIVITSMLLGFGNS) form the signal peptide. 4 disulfide bridges follow: Cys33/Cys74, Cys43/Cys58, Cys59/Cys101, and Cys72/Cys111. The tract at residues 138–158 (NSTSPTQIHKDGTGGGKAEPV) is disordered. Ser160 carries GPI-anchor amidated serine lipidation. Positions 161–184 (NGWKEKSWLGVELLIYLLVSLIFF) are cleaved as a propeptide — removed in mature form.

This sequence belongs to the plant LTP family. In terms of tissue distribution, preferentially expressed in the shoot apical meristem and the root meristem. Also present in the ovules and developing embryos. Observed in cotyledons, hypocotyls, flowers, leaves and siliques. Up-regulated in the epidermis of stems.

Its subcellular location is the cell membrane. Functionally, lipid transfer protein involved in seed and ovule maturation and development, probably by regulating the fatty acids homeostasis during suberin and sporopollenin biosynthesis or deposition. Contributes to pre-invasive defense against some non-host powdery mildew pathogens by preventing the penetration of the epidermal cell wall by the fungal agents (e.g. Blumeria graminis f. sp. hordei (Bgh)). The protein is Non-specific lipid transfer protein GPI-anchored 6 of Arabidopsis thaliana (Mouse-ear cress).